Consider the following 240-residue polypeptide: Transcription factor bHLH47 (240 aa).

Residues methionine 1–alanine 13 are compositionally biased toward polar residues. The segment at methionine 1–valine 26 is disordered. The 51-residue stretch at proline 27 to valine 77 folds into the bHLH domain. Positions valine 98–lysine 131 form a coiled coil. A compositionally biased stretch (polar residues) spans asparagine 128–proline 138. Positions asparagine 128–glutamate 153 are disordered.

Homodimer. Forms heterodimer with PYEL proteins bHLH115, bHLH104 and ILR3. Expressed constitutively in roots, leaves, stems, and flowers.

The protein resides in the nucleus. This is Transcription factor bHLH47 (BHLH47) from Arabidopsis thaliana (Mouse-ear cress).